The chain runs to 361 residues: Chitinase-3-like protein 1 (361 aa).

One can recognise a GH18 domain in the interval 1 to 361 (YKLICYYTSW…SAVKDVLAEV (361 aa)). C5 and C30 are disulfide-bonded. N39 carries an N-linked (GlcNAc...) asparagine glycan. Residues 49 to 50 (EW), 76 to 79 (GGWN), Y120, 183 to 186 (LTYD), and R241 each bind chitin. An intrachain disulfide couples C278 to C342. The interval 302–316 (QWVAYDDQESVKNKA) is important for AKT1 activation and IL8 production. Residue W330 participates in chitin binding. Residue N345 is glycosylated (N-linked (GlcNAc...) asparagine).

This sequence belongs to the glycosyl hydrolase 18 family. Monomer. In terms of tissue distribution, detected in mammary gland.

The protein resides in the secreted. The protein localises to the extracellular space. It localises to the cytoplasm. It is found in the perinuclear region. Its subcellular location is the endoplasmic reticulum. Carbohydrate-binding lectin with a preference for chitin. Has no chitinase activity. May play a role in tissue remodeling and in the capacity of cells to respond to and cope with changes in their environment. Plays a role in T-helper cell type 2 (Th2) inflammatory response and IL-13-induced inflammation, regulating allergen sensitization, inflammatory cell apoptosis, dendritic cell accumulation and M2 macrophage differentiation. Facilitates invasion of pathogenic enteric bacteria into colonic mucosa and lymphoid organs. Mediates activation of AKT1 signaling pathway and subsequent IL8 production in colonic epithelial cells. Regulates antibacterial responses in lung by contributing to macrophage bacterial killing, controlling bacterial dissemination and augmenting host tolerance. Also regulates hyperoxia-induced injury, inflammation and epithelial apoptosis in lung. This chain is Chitinase-3-like protein 1 (CHI3L1), found in Ovis aries (Sheep).